The chain runs to 224 residues: 7-cyano-7-deazaguanine synthase (224 aa).

8-18 (LSGGMDSAAVI) contributes to the ATP binding site. Residues cysteine 186, cysteine 196, cysteine 199, and cysteine 202 each contribute to the Zn(2+) site.

The protein belongs to the QueC family. It depends on Zn(2+) as a cofactor.

It catalyses the reaction 7-carboxy-7-deazaguanine + NH4(+) + ATP = 7-cyano-7-deazaguanine + ADP + phosphate + H2O + H(+). The protein operates within purine metabolism; 7-cyano-7-deazaguanine biosynthesis. In terms of biological role, catalyzes the ATP-dependent conversion of 7-carboxy-7-deazaguanine (CDG) to 7-cyano-7-deazaguanine (preQ(0)). This is 7-cyano-7-deazaguanine synthase from Xanthomonas euvesicatoria pv. vesicatoria (strain 85-10) (Xanthomonas campestris pv. vesicatoria).